The primary structure comprises 484 residues: Coronin-1B (484 aa).

Serine 2 is modified (phosphoserine). WD repeat units lie at residues 80–120, 130–170, 174–213, 217–260, and 265–305; these read GHTG…LTSP, GHTK…ELYR, LHPD…LVAE, AHEG…EPMA, and DSSN…PYIH. The stretch at 447-481 forms a coiled coil; sequence KLEEVMHGLRALRVLVKEQGERISRLEEHLGRMEN.

Belongs to the WD repeat coronin family. Forms homooligomers, but does not form complexes with the other coronins. Interacts with Arp2/3 complex components, including ACTR2, ARPC1B and ARPC2. Binds actin. Post-translationally, phosphorylation on Ser-2 regulates the interaction with the Arp2/3 complex and cell motility in fibroblasts. Phosphorylation does not seem to affect subcellular location.

Its subcellular location is the cytoplasm. The protein localises to the cytoskeleton. It localises to the stress fiber. Functionally, regulates leading edge dynamics and cell motility in fibroblasts. May be involved in cytokinesis and signal transduction. The protein is Coronin-1B (Coro1b) of Rattus norvegicus (Rat).